Consider the following 231-residue polypeptide: Putative cobalt transport protein CbiM 1 (231 aa).

Helical transmembrane passes span 8 to 28 (LPLQ…AYGI), 41 to 61 (TLPL…LKMP), 74 to 94 (GLGA…IVLV), 97 to 117 (ALFL…SMGI), 138 to 158 (IVNV…ITSI), and 175 to 195 (FITF…IEGI).

The protein belongs to the CbiM family. As to quaternary structure, forms an energy-coupling factor (ECF) transporter complex composed of an ATP-binding protein (A component, CbiO), a transmembrane protein (T component, CbiQ) and 2 possible substrate-capture proteins (S components, CbiM and CbiN) of unknown stoichimetry.

The protein localises to the cell membrane. It participates in cofactor biosynthesis; adenosylcobalamin biosynthesis. In terms of biological role, part of the energy-coupling factor (ECF) transporter complex CbiMNOQ involved in cobalt import. In Methanosphaerula palustris (strain ATCC BAA-1556 / DSM 19958 / E1-9c), this protein is Putative cobalt transport protein CbiM 1.